A 195-amino-acid polypeptide reads, in one-letter code: Keratin-associated protein 4-3 (195 aa).

Tandem repeats lie at residues 34-38 (CCRTT), 39-43 (CCRPS), 44-48 (CCISS), 49-53 (CCRPS), 54-58 (CCISS), 59-63 (CCKPS), 64-68 (CCRTT), 69-73 (CCRPS), 74-78 (CCISS), 79-83 (CCRPS), 84-88 (CCISS), 89-93 (CCKPS), 94-98 (CCRTT), 99-103 (CCRPS), 104-108 (CCISS), 109-113 (CCRPS), 114-118 (CCISS), 119-123 (CCKPS), 124-128 (CCQTT), 129-133 (CCRPS), 134-138 (CCISS), 144-148 (CCQPS), 149-153 (CCRPA), 154-158 (CCISS), 159-163 (CCHPS), 164-168 (CCVSS), 179-183 (CCRTT), and 189-193 (CCGSS). Residues 34–193 (CCRTTCCRPS…CFHPICCGSS (160 aa)) form a 29 X 5 AA repeats of C-C-[GIKRQVH]-[SPT]-[STA] region.

It belongs to the KRTAP type 4 family. As to quaternary structure, interacts with hair keratins. As to expression, expressed specifically in the middle/uper portions of the hair cortex. Not detected in the hair matrix or cuticle.

In the hair cortex, hair keratin intermediate filaments are embedded in an interfilamentous matrix, consisting of hair keratin-associated proteins (KRTAP), which are essential for the formation of a rigid and resistant hair shaft through their extensive disulfide bond cross-linking with abundant cysteine residues of hair keratins. The matrix proteins include the high-sulfur and high-glycine-tyrosine keratins. The chain is Keratin-associated protein 4-3 (KRTAP4-3) from Homo sapiens (Human).